The sequence spans 596 residues: Probable lysosomal cobalamin transporter (596 aa).

Transmembrane regions (helical) follow at residues alanine 7–phenylalanine 27, isoleucine 46–valine 66, isoleucine 95–threonine 115, threonine 145–alanine 165, leucine 196–leucine 216, leucine 313–threonine 333, isoleucine 350–valine 370, valine 376–isoleucine 396, methionine 420–isoleucine 440, and phenylalanine 507–phenylalanine 527. A disordered region spans residues tryptophan 566–aspartate 596. Positions isoleucine 587–aspartate 596 are enriched in basic and acidic residues.

This sequence belongs to the LIMR family. LMBRD1 subfamily.

It localises to the lysosome membrane. Its function is as follows. Probable lysosomal cobalamin transporter. Required to export cobalamin from lysosomes allowing its conversion to cofactors. This is Probable lysosomal cobalamin transporter from Sclerotinia sclerotiorum (strain ATCC 18683 / 1980 / Ss-1) (White mold).